A 307-amino-acid polypeptide reads, in one-letter code: Probable aspartoacylase (307 aa).

Zn(2+) contacts are provided by His-13 and Glu-16. Residues Arg-55 and 62–63 (NR) each bind substrate. Position 105 (His-105) interacts with Zn(2+). Substrate is bound by residues Glu-163 and Tyr-276.

It belongs to the AspA/AstE family. Aspartoacylase subfamily. It depends on Zn(2+) as a cofactor.

It catalyses the reaction an N-acyl-L-aspartate + H2O = a carboxylate + L-aspartate. The chain is Probable aspartoacylase from Prochlorococcus marinus (strain SARG / CCMP1375 / SS120).